A 363-amino-acid chain; its full sequence is Probable iron/ascorbate oxidoreductase DDB_G0283291 (363 aa).

In terms of domain architecture, Fe2OG dioxygenase spans 197–306; that stretch reads IFNYPSIISS…RISFPLFFDP (110 aa). H230, D232, and H286 together coordinate Fe cation. 2-oxoglutarate is bound at residue R297.

This sequence belongs to the iron/ascorbate-dependent oxidoreductase family. It depends on Fe(2+) as a cofactor.

This Dictyostelium discoideum (Social amoeba) protein is Probable iron/ascorbate oxidoreductase DDB_G0283291.